We begin with the raw amino-acid sequence, 153 residues long: Fucose mutarotase (153 aa).

His-24 functions as the Proton donor in the catalytic mechanism. Asp-32 is a substrate binding site. The active site involves Asp-69. Positions 79, 120, 138, and 140 each coordinate substrate. Tyr-120 is a catalytic residue.

The protein belongs to the RbsD / FucU family. Mainly homodimer, but also exists as homotetramer, homooctamer, and homodecamer. The homodimeric form seems catalytically inactive. As to expression, widely expressed in various tissues and cell lines, including kidney, liver, and pancreas, marginally in muscle and testis.

The enzyme catalyses alpha-L-fucose = beta-L-fucose. It functions in the pathway carbohydrate metabolism; L-fucose metabolism. Functionally, involved in the interconversion between alpha- and beta-L-fucoses. L-Fucose (6-deoxy-L-galactose) exists as alpha-L-fucose (29.5%) and beta-L-fucose (70.5%), the beta-form is metabolized through the salvage pathway. GDP-L-fucose formed either by the de novo or salvage pathways is transported into the endoplasmic reticulum, where it serves as a substrate for N- and O-glycosylations by fucosyltransferases. Fucosylated structures expressed on cell surfaces or secreted in biological fluids are believed to play a critical role in cell-cell adhesion and recognition processes. The protein is Fucose mutarotase (Fuom) of Mus musculus (Mouse).